The sequence spans 509 residues: Cobyric acid synthase (509 aa).

Residues 262–459 form the GATase cobBQ-type domain; that stretch reads ELKVGIIKLP…IHGIFENDDW (198 aa). The active-site Nucleophile is the Cys-343. Residue His-451 is part of the active site.

Belongs to the CobB/CobQ family. CobQ subfamily.

Its pathway is cofactor biosynthesis; adenosylcobalamin biosynthesis. In terms of biological role, catalyzes amidations at positions B, D, E, and G on adenosylcobyrinic A,C-diamide. NH(2) groups are provided by glutamine, and one molecule of ATP is hydrogenolyzed for each amidation. The chain is Cobyric acid synthase from Prochlorococcus marinus subsp. pastoris (strain CCMP1986 / NIES-2087 / MED4).